Here is a 620-residue protein sequence, read N- to C-terminus: Somatic embryogenesis receptor kinase 4 (620 aa).

Positions methionine 1–glycine 33 are cleaved as a signal peptide. The Extracellular segment spans residues aspartate 34 to glycine 234. LRR repeat units follow at residues asparagine 100–leucine 122, glutamate 124–leucine 146, lysine 148–valine 170, glutamine 171–serine 193, and leucine 194–serine 215. Asparagine 110 carries N-linked (GlcNAc...) asparagine glycosylation. N-linked (GlcNAc...) asparagine glycosylation is found at asparagine 156, asparagine 189, and asparagine 202. The tract at residues leucine 205 to glutamine 227 is disordered. Residues proline 209–serine 224 are compositionally biased toward pro residues. A helical membrane pass occupies residues glycine 235–leucine 255. Topologically, residues arginine 256–arginine 620 are cytoplasmic. Threonine 291 is modified (phosphothreonine). In terms of domain architecture, Protein kinase spans phenylalanine 294–asparagine 591. The residue at position 295 (serine 295) is a Phosphoserine. ATP-binding positions include leucine 300–valine 308 and lysine 322. Serine 375 and serine 378 each carry phosphoserine. Aspartate 421 functions as the Proton acceptor in the catalytic mechanism. 3 positions are modified to phosphothreonine: threonine 454, threonine 455, and threonine 460. Tyrosine 468 carries the phosphotyrosine modification. Serine 470 carries the post-translational modification Phosphoserine. Phosphothreonine is present on threonine 471. Phosphoserine is present on serine 475. Threonine 551 is subject to Phosphothreonine.

This sequence belongs to the protein kinase superfamily. Ser/Thr protein kinase family. Interacts with the EF-Tu receptor EFR and FLS2 in a specific ligand-induced manner. Interacts with TMK4/BARK1. Interacts with ERECTA in a EPF2-induced manner. Interacts with ERL1 in a EPF1-induced manner. Interacts with TMM. Forms a complex with MIK2 in response to SCOOP12 perception. Post-translationally, autophosphorylated on Thr and Tyr residues.

The protein localises to the cell membrane. The catalysed reaction is L-seryl-[protein] + ATP = O-phospho-L-seryl-[protein] + ADP + H(+). It carries out the reaction L-threonyl-[protein] + ATP = O-phospho-L-threonyl-[protein] + ADP + H(+). The enzyme catalyses L-tyrosyl-[protein] + ATP = O-phospho-L-tyrosyl-[protein] + ADP + H(+). Its function is as follows. Dual specificity kinase acting on both serine/threonine- and tyrosine-containing substrates. Positively regulates the BR-dependent plant growth pathway and negatively regulates the BR-independent cell-death pathway. Required during SCOOP small peptides (e.g. SCOOP10 and SCOOP12) perception and signaling; associates with MIK2 as a coreceptor upon MIK2 perception of SCOOP peptides, and relays the signaling through the activation of receptor-like cytosolic kinases (RLCKs) BIK1 and PBL1. This chain is Somatic embryogenesis receptor kinase 4, found in Arabidopsis thaliana (Mouse-ear cress).